An 863-amino-acid chain; its full sequence is Bifunctional uridylyltransferase/uridylyl-removing enzyme (863 aa).

The interval 1–328 (MLFSPTLSSL…SSNQDTVIDQ (328 aa)) is uridylyltransferase. The uridylyl-removing stretch occupies residues 329–687 (LDDDFQLINQ…ISNRFSLGGT (359 aa)). Residues 446-568 (VDEHTLRVML…MQNQVRLDYL (123 aa)) form the HD domain. 2 ACT domains span residues 688-764 (EVFI…KLPA) and 794-863 (EMEL…QQIR).

It belongs to the GlnD family. The cofactor is Mg(2+).

It carries out the reaction [protein-PII]-L-tyrosine + UTP = [protein-PII]-uridylyl-L-tyrosine + diphosphate. It catalyses the reaction [protein-PII]-uridylyl-L-tyrosine + H2O = [protein-PII]-L-tyrosine + UMP + H(+). Its activity is regulated as follows. Uridylyltransferase (UTase) activity is inhibited by glutamine, while glutamine activates uridylyl-removing (UR) activity. In terms of biological role, modifies, by uridylylation and deuridylylation, the PII regulatory proteins (GlnB and homologs), in response to the nitrogen status of the cell that GlnD senses through the glutamine level. Under low glutamine levels, catalyzes the conversion of the PII proteins and UTP to PII-UMP and PPi, while under higher glutamine levels, GlnD hydrolyzes PII-UMP to PII and UMP (deuridylylation). Thus, controls uridylylation state and activity of the PII proteins, and plays an important role in the regulation of nitrogen assimilation and metabolism. This chain is Bifunctional uridylyltransferase/uridylyl-removing enzyme, found in Haemophilus influenzae (strain ATCC 51907 / DSM 11121 / KW20 / Rd).